Reading from the N-terminus, the 43-residue chain is Protein PsbN (43 aa).

Residues 7–29 (IVIFVSSLLLGITTYSVYTAFGP) traverse the membrane as a helical segment.

The protein belongs to the PsbN family.

It is found in the plastid. The protein resides in the chloroplast thylakoid membrane. Its function is as follows. May play a role in photosystem I and II biogenesis. This Phaeodactylum tricornutum (strain CCAP 1055/1) protein is Protein PsbN.